A 348-amino-acid chain; its full sequence is Phosphoribosylformylglycinamidine cyclo-ligase (348 aa).

The protein belongs to the AIR synthase family.

The protein localises to the cytoplasm. It carries out the reaction 2-formamido-N(1)-(5-O-phospho-beta-D-ribosyl)acetamidine + ATP = 5-amino-1-(5-phospho-beta-D-ribosyl)imidazole + ADP + phosphate + H(+). The protein operates within purine metabolism; IMP biosynthesis via de novo pathway; 5-amino-1-(5-phospho-D-ribosyl)imidazole from N(2)-formyl-N(1)-(5-phospho-D-ribosyl)glycinamide: step 2/2. The chain is Phosphoribosylformylglycinamidine cyclo-ligase from Sorangium cellulosum (strain So ce56) (Polyangium cellulosum (strain So ce56)).